Reading from the N-terminus, the 2020-residue chain is Metacaspase-2 (2020 aa).

Composition is skewed to basic and acidic residues over residues 51–60 (SENDRNESIQ) and 69–78 (DNRKTNKSEK). Disordered stretches follow at residues 51-78 (SENDRNESIQKKQMLSSMDNRKTNKSEK) and 573-614 (RNGN…NINN). Residues 576–614 (NINNNKNNNINNNNNNINNNNNNINNNNNNINNNNNINN) show a composition bias toward low complexity.

The protein belongs to the peptidase C14B family.

The protein resides in the cytoplasm. Ca(2+) does not appear to affect catalytic activity. In terms of biological role, protease that cleaves specifically after arginine or lysine residues. May play a role in parasite growth and/or development. The protein is Metacaspase-2 of Plasmodium falciparum (isolate 3D7).